We begin with the raw amino-acid sequence, 186 residues long: Serine hydrolase RBBP9 (186 aa).

Residues 56–70 (LPFMETELHCDEKTI) are retinoblastoma protein binding. Residues 63–67 (LHCDE) are involved in binding to RB1. Active-site charge relay system residues include Ser-75, Asp-138, and His-165.

This sequence belongs to the RBBP9 family. As to quaternary structure, interacts with RB1; the interaction disrupts RB1 binding to E2F1. Interacts with RBL1 and RBL2. In terms of tissue distribution, expressed in spleen.

It catalyses the reaction valacyclovir + H2O = acyclovir + L-valine + H(+). Serine hydrolase. Catalyzes the hydrolytic activation of amino acid ester of the antiviral prodrug valacyclovir to its corresponding active drug, acyclovir. May negatively regulate basal or autocrine TGF-beta signaling by suppressing SMAD2-SMAD3 phosphorylation. May play a role in the transformation process due to its capacity to confer resistance to the growth-inhibitory effects of TGF-beta through interaction with RB1 and the subsequent displacement of E2F1. The protein is Serine hydrolase RBBP9 (Rbbp9) of Mus musculus (Mouse).